We begin with the raw amino-acid sequence, 238 residues long: 7-cyano-7-deazaguanine synthase (238 aa).

An ATP-binding site is contributed by 10-20 (LSGGLDSSTVL). Residues cysteine 190, cysteine 198, cysteine 201, and cysteine 204 each coordinate Zn(2+).

This sequence belongs to the QueC family. Zn(2+) serves as cofactor.

It catalyses the reaction 7-carboxy-7-deazaguanine + NH4(+) + ATP = 7-cyano-7-deazaguanine + ADP + phosphate + H2O + H(+). Its pathway is purine metabolism; 7-cyano-7-deazaguanine biosynthesis. Functionally, catalyzes the ATP-dependent conversion of 7-carboxy-7-deazaguanine (CDG) to 7-cyano-7-deazaguanine (preQ(0)). The chain is 7-cyano-7-deazaguanine synthase from Thermoplasma acidophilum (strain ATCC 25905 / DSM 1728 / JCM 9062 / NBRC 15155 / AMRC-C165).